The primary structure comprises 109 residues: Nucleoid-associated protein NT01EI_1109 (109 aa).

The tract at residues 89 to 109 (KERMASVSSGMQLPPGFKMPF) is disordered.

This sequence belongs to the YbaB/EbfC family. As to quaternary structure, homodimer.

It is found in the cytoplasm. It localises to the nucleoid. Its function is as follows. Binds to DNA and alters its conformation. May be involved in regulation of gene expression, nucleoid organization and DNA protection. This Edwardsiella ictaluri (strain 93-146) protein is Nucleoid-associated protein NT01EI_1109.